Reading from the N-terminus, the 535-residue chain is Succinate-semialdehyde dehydrogenase, mitochondrial (535 aa).

Residues 1–47 (MATCFWLRSCGARRLGSTFPGCRLRPRAGGLVPASGPAPGPAQLRCY) constitute a mitochondrion transit peptide. Residue Lys126 is modified to N6-acetyllysine; alternate. At Lys126 the chain carries N6-succinyllysine; alternate. Lys135 and Lys184 each carry N6-succinyllysine. NAD(+) contacts are provided by residues Arg213 and 228–231 (KPAE). A substrate-binding site is contributed by Arg213. Lys265 carries the N6-acetyllysine; alternate modification. An N6-succinyllysine; alternate modification is found at Lys265. 284–289 (GSTTTG) lines the NAD(+) pocket. Glu306 functions as the Proton acceptor in the catalytic mechanism. Position 334 (Arg334) interacts with substrate. Residue Cys340 is the Nucleophile of the active site. A disulfide bridge links Cys340 with Cys342. Lys365 carries the N6-acetyllysine modification. N6-succinyllysine is present on Lys402. N6-acetyllysine is present on Lys411. Substrate is bound at residue Ser498. Ser499 carries the post-translational modification Phosphoserine.

Belongs to the aldehyde dehydrogenase family. In terms of assembly, homotetramer.

The protein localises to the mitochondrion. It carries out the reaction succinate semialdehyde + NAD(+) + H2O = succinate + NADH + 2 H(+). It participates in amino-acid degradation; 4-aminobutanoate degradation. Its activity is regulated as follows. Redox-regulated. Inhibited under oxydizing conditions. Catalyzes one step in the degradation of the inhibitory neurotransmitter gamma-aminobutyric acid (GABA). The sequence is that of Succinate-semialdehyde dehydrogenase, mitochondrial (ALDH5A1) from Hylobates lar (Lar gibbon).